The following is a 431-amino-acid chain: Glucose-1-phosphate adenylyltransferase (431 aa).

Lys-39 is a beta-D-fructose 1,6-bisphosphate binding site. AMP contacts are provided by Arg-40, His-46, and Arg-52. Alpha-D-glucose 1-phosphate is bound at residue Tyr-114. Residue Arg-130 coordinates AMP. Alpha-D-glucose 1-phosphate contacts are provided by residues Gly-179, 194 to 195 (EK), and Ser-212. Positions 370 and 386 each coordinate AMP. Residues 419-423 (REMLR) and 429-431 (QER) each bind beta-D-fructose 1,6-bisphosphate.

The protein belongs to the bacterial/plant glucose-1-phosphate adenylyltransferase family. As to quaternary structure, homotetramer.

The enzyme catalyses alpha-D-glucose 1-phosphate + ATP + H(+) = ADP-alpha-D-glucose + diphosphate. It functions in the pathway glycan biosynthesis; glycogen biosynthesis. Its activity is regulated as follows. Allosterically activated by fructose-1,6-bisphosphate (F16BP) and inhibited by AMP. Involved in the biosynthesis of ADP-glucose, a building block required for the elongation reactions to produce glycogen. Catalyzes the reaction between ATP and alpha-D-glucose 1-phosphate (G1P) to produce pyrophosphate and ADP-Glc. This is Glucose-1-phosphate adenylyltransferase from Shigella boydii serotype 18 (strain CDC 3083-94 / BS512).